Reading from the N-terminus, the 446-residue chain is Divalent metal cation transporter MntH (446 aa).

A run of 11 helical transmembrane segments spans residues 32–52 (LAFL…GNWI), 59–79 (AQFG…AMLL), 107–127 (AIIF…AEVI), 139–159 (IPLI…LFIM), 168–188 (AIVG…VYIS), 205–225 (IIAN…TIMP), 264–284 (SIAF…FYGV), 303–323 (PVLG…ALLA), 355–375 (LVTR…FRGN), 381–401 (QLLV…LIPL), and 420–440 (VNIC…YLII).

Belongs to the NRAMP family.

The protein localises to the cell membrane. H(+)-stimulated, divalent metal cation uptake system. This is Divalent metal cation transporter MntH from Staphylococcus haemolyticus (strain JCSC1435).